A 203-amino-acid polypeptide reads, in one-letter code: CCG-binding protein 1 (203 aa).

Positions 156 to 178 (IPDGLPKSEQELEEEEKSKMPDS) are disordered. Basic and acidic residues predominate over residues 161 to 175 (PKSEQELEEEEKSKM).

In terms of assembly, homotetramer. Interacts with MEE12/CCG, MED7A, MED7B, MED9, AGL49, AGL53, AGL75, AGL80, AGL81, AGL82, AGL103 and NRPB1 (via CTD). Expressed in roots, leaves, stems and flowers. Expressed in the central cell of mature ovules.

The protein localises to the nucleus. It localises to the cytoplasm. Its function is as follows. Required for the development of the one-cell zygote and endosperm in embryos. Required for micropylar pollen tube guidance, but has no effect on ovule development and gametophytic cell fate specification. May connect transcription factors and the Pol II machinery to regulate pollen tube attraction, via its interactions with AGAMOUS-like (AGL) transcription factors, MEE14/CCG and the Mediator complex. The polypeptide is CCG-binding protein 1 (Arabidopsis thaliana (Mouse-ear cress)).